The chain runs to 611 residues: DNA mismatch repair protein MutL (611 aa).

This sequence belongs to the DNA mismatch repair MutL/HexB family.

Functionally, this protein is involved in the repair of mismatches in DNA. It is required for dam-dependent methyl-directed DNA mismatch repair. May act as a 'molecular matchmaker', a protein that promotes the formation of a stable complex between two or more DNA-binding proteins in an ATP-dependent manner without itself being part of a final effector complex. In Bartonella bacilliformis (strain ATCC 35685 / KC583 / Herrer 020/F12,63), this protein is DNA mismatch repair protein MutL.